A 201-amino-acid chain; its full sequence is Large ribosomal subunit protein uL4 (201 aa).

A disordered region spans residues 43–66 (TRAQKTRSEVSGGGKKPWRQKGTG).

This sequence belongs to the universal ribosomal protein uL4 family. As to quaternary structure, part of the 50S ribosomal subunit.

Its function is as follows. One of the primary rRNA binding proteins, this protein initially binds near the 5'-end of the 23S rRNA. It is important during the early stages of 50S assembly. It makes multiple contacts with different domains of the 23S rRNA in the assembled 50S subunit and ribosome. Functionally, forms part of the polypeptide exit tunnel. This is Large ribosomal subunit protein uL4 from Tolumonas auensis (strain DSM 9187 / NBRC 110442 / TA 4).